Consider the following 227-residue polypeptide: UPF0173 metal-dependent hydrolase BCG9842_B0515 (227 aa).

This sequence belongs to the UPF0173 family.

This is UPF0173 metal-dependent hydrolase BCG9842_B0515 from Bacillus cereus (strain G9842).